Consider the following 83-residue polypeptide: Small ribosomal subunit protein uS17 (83 aa).

Belongs to the universal ribosomal protein uS17 family. In terms of assembly, part of the 30S ribosomal subunit.

Its function is as follows. One of the primary rRNA binding proteins, it binds specifically to the 5'-end of 16S ribosomal RNA. This chain is Small ribosomal subunit protein uS17, found in Chlamydia trachomatis serovar L2 (strain ATCC VR-902B / DSM 19102 / 434/Bu).